The primary structure comprises 259 residues: MDPIALQAGFDLLNDGRPETLWLGIGTLLMLIGTFYFIARGWGVTDKEAREYYAITILVPGIASAAYLAMFFGIGVTEVELASGTVLDIYYARYADWLFTTPLLLLDLALLAKVDRVTIGTLIGVDALMIVTGLIGALSKTPLARYTWWLFSTIAFLFVLYYLLTSLRSAAAKRSEEVRSTFNTLTALVAVLWTAYPILWIVGTEGAGVVGLGIETLAFMVLDVTAKVGFGFVLLRSRAILGETEAPEPSAGADASAAD.

Residues 1–6 constitute a propeptide that is removed on maturation; that stretch reads MDPIAL. Position 7 is a pyrrolidone carboxylic acid (Gln7). Over 7–18 the chain is Extracellular; the sequence is QAGFDLLNDGRP. The helical transmembrane segment at 19-40 threads the bilayer; sequence ETLWLGIGTLLMLIGTFYFIAR. Residues 41 to 49 lie on the Cytoplasmic side of the membrane; it reads GWGVTDKEA. Residues 50–71 traverse the membrane as a helical segment; that stretch reads REYYAITILVPGIASAAYLAMF. The Extracellular segment spans residues 72–90; it reads FGIGVTEVELASGTVLDIY. A helical membrane pass occupies residues 91–112; that stretch reads YARYADWLFTTPLLLLDLALLA. At 113–115 the chain is on the cytoplasmic side; it reads KVD. The helical transmembrane segment at 116-138 threads the bilayer; the sequence is RVTIGTLIGVDALMIVTGLIGAL. At 139–142 the chain is on the extracellular side; that stretch reads SKTP. A helical membrane pass occupies residues 143 to 171; that stretch reads LARYTWWLFSTIAFLFVLYYLLTSLRSAA. Topologically, residues 172-174 are cytoplasmic; it reads AKR. The chain crosses the membrane as a helical span at residues 175–203; that stretch reads SEEVRSTFNTLTALVAVLWTAYPILWIVG. At 204–211 the chain is on the extracellular side; sequence TEGAGVVG. Residues 212 to 244 form a helical membrane-spanning segment; that stretch reads LGIETLAFMVLDVTAKVGFGFVLLRSRAILGET. At Lys227 the chain carries N6-(retinylidene)lysine. At 245 to 259 the chain is on the cytoplasmic side; it reads EAPEPSAGADASAAD.

Belongs to the archaeal/bacterial/fungal opsin family.

It localises to the cell membrane. Functionally, light-driven proton pump. It may interact with bacterioruberin in the claret membrane. The protein is Archaerhodopsin-2 of Halobacterium sp. (strain aus-2).